The following is a 379-amino-acid chain: Homoserine O-acetyltransferase (379 aa).

Residues 45 to 355 (NAILILHALT…PHGHDAFLIE (311 aa)) form the AB hydrolase-1 domain. Serine 151 acts as the Nucleophile in catalysis. Substrate is bound at residue arginine 220. Active-site residues include aspartate 316 and histidine 349. A substrate-binding site is contributed by aspartate 350.

The protein belongs to the AB hydrolase superfamily. MetX family. As to quaternary structure, homodimer.

The protein resides in the cytoplasm. It carries out the reaction L-homoserine + acetyl-CoA = O-acetyl-L-homoserine + CoA. Its pathway is amino-acid biosynthesis; L-methionine biosynthesis via de novo pathway; O-acetyl-L-homoserine from L-homoserine: step 1/1. Its function is as follows. Transfers an acetyl group from acetyl-CoA to L-homoserine, forming acetyl-L-homoserine. The polypeptide is Homoserine O-acetyltransferase (Carboxydothermus hydrogenoformans (strain ATCC BAA-161 / DSM 6008 / Z-2901)).